Here is a 357-residue protein sequence, read N- to C-terminus: Aminomethyltransferase (357 aa).

The protein belongs to the GcvT family. As to quaternary structure, the glycine cleavage system is composed of four proteins: P, T, L and H.

It catalyses the reaction N(6)-[(R)-S(8)-aminomethyldihydrolipoyl]-L-lysyl-[protein] + (6S)-5,6,7,8-tetrahydrofolate = N(6)-[(R)-dihydrolipoyl]-L-lysyl-[protein] + (6R)-5,10-methylene-5,6,7,8-tetrahydrofolate + NH4(+). Functionally, the glycine cleavage system catalyzes the degradation of glycine. The sequence is that of Aminomethyltransferase from Deinococcus deserti (strain DSM 17065 / CIP 109153 / LMG 22923 / VCD115).